Reading from the N-terminus, the 312-residue chain is Ribosomal protein L11 methyltransferase (312 aa).

Residues Thr-163, Gly-184, Asp-206, and Asn-248 each coordinate S-adenosyl-L-methionine.

The protein belongs to the methyltransferase superfamily. PrmA family.

The protein resides in the cytoplasm. The enzyme catalyses L-lysyl-[protein] + 3 S-adenosyl-L-methionine = N(6),N(6),N(6)-trimethyl-L-lysyl-[protein] + 3 S-adenosyl-L-homocysteine + 3 H(+). In terms of biological role, methylates ribosomal protein L11. This is Ribosomal protein L11 methyltransferase from Clostridium kluyveri (strain NBRC 12016).